A 177-amino-acid chain; its full sequence is Adenine phosphoribosyltransferase (177 aa).

This sequence belongs to the purine/pyrimidine phosphoribosyltransferase family. Homodimer.

Its subcellular location is the cytoplasm. The enzyme catalyses AMP + diphosphate = 5-phospho-alpha-D-ribose 1-diphosphate + adenine. It participates in purine metabolism; AMP biosynthesis via salvage pathway; AMP from adenine: step 1/1. Catalyzes a salvage reaction resulting in the formation of AMP, that is energically less costly than de novo synthesis. This Prosthecochloris aestuarii (strain DSM 271 / SK 413) protein is Adenine phosphoribosyltransferase.